We begin with the raw amino-acid sequence, 193 residues long: Peptidyl-tRNA hydrolase (193 aa).

Y14 is a binding site for tRNA. Residue H19 is the Proton acceptor of the active site. TRNA is bound by residues F64, N66, and N112.

It belongs to the PTH family. In terms of assembly, monomer.

It localises to the cytoplasm. The catalysed reaction is an N-acyl-L-alpha-aminoacyl-tRNA + H2O = an N-acyl-L-amino acid + a tRNA + H(+). Hydrolyzes ribosome-free peptidyl-tRNAs (with 1 or more amino acids incorporated), which drop off the ribosome during protein synthesis, or as a result of ribosome stalling. Its function is as follows. Catalyzes the release of premature peptidyl moieties from peptidyl-tRNA molecules trapped in stalled 50S ribosomal subunits, and thus maintains levels of free tRNAs and 50S ribosomes. In Bartonella bacilliformis (strain ATCC 35685 / KC583 / Herrer 020/F12,63), this protein is Peptidyl-tRNA hydrolase.